Here is a 21-residue protein sequence, read N- to C-terminus: Tertiapin (21 aa).

Intrachain disulfides connect Cys-3-Cys-14 and Cys-5-Cys-18.

In terms of processing, oxidation of Met-13 results in the loss of biological activity. Post-translationally, an amidation at Lys-21 is suggested in Ref.1. Expressed by the venom gland.

The protein localises to the secreted. Functionally, presynaptic neurotoxin that blocks the inwardly rectifying Kir1.1/KCNJ1 and Kir3.1/3.4 (KCNJ3/KCNJ5) potassium channels with high affinity by binding to the M1-M2 linker region of these channels in a 1:1 stoichiometry. It may block the potassium channel pore by occluding its alpha helix into the channel vestibule. Tertiapin-Q also inhibits calcium-activated large conductance BK-type (KCNMA) potassium channels in a concentration-, and voltage-dependent manner, in addition to inhibiting Kir3.1/3.2 (KCNJ3/KCNJ6) heteromultimers potassium channels. It can prevent dose-dependently acetylcholine(ACh)-induced atrioventricular blocks in mammalian hearts, as KCNJ3/KCNJ5 channels (also named I(KACh), because these channels are activated by ACh) are found in mammalian myocytes. Interacts specifically with calmodulin in the presence of calcium. The polypeptide is Tertiapin (Apis mellifera (Honeybee)).